Consider the following 277-residue polypeptide: Caspase-3 (277 aa).

N-acetylmethionine is present on Met1. Propeptides lie at residues Met1–Asp9 and Ser10–Asp28. N6-acetyllysine is present on Lys11. Ser26 is subject to Phosphoserine. Catalysis depends on residues His121 and Cys163. S-nitrosocysteine; in inhibited form is present on Cys163.

Belongs to the peptidase C14A family. Heterotetramer that consists of two anti-parallel arranged heterodimers, each one formed by a 17 kDa (p17) and a 12 kDa (p12) subunit. Interacts with BIRC6/bruce. Post-translationally, cleavage by granzyme B, caspase-6, caspase-8 and caspase-10 generates the two active subunits. Additional processing of the propeptides is likely due to the autocatalytic activity of the activated protease. Active heterodimers between the small subunit of caspase-7 protease and the large subunit of caspase-3 also occur and vice versa. In terms of processing, S-nitrosylated on its catalytic site cysteine in unstimulated cell lines and denitrosylated upon activation of the Fas apoptotic pathway, associated with an increase in intracellular caspase activity. Fas therefore activates caspase-3 not only by inducing the cleavage of the caspase zymogen to its active subunits, but also by stimulating the denitrosylation of its active site thiol. Ubiquitinated by BIRC6; this activity is inhibited by DIABLO/SMAC.

It is found in the cytoplasm. The enzyme catalyses Strict requirement for an Asp residue at positions P1 and P4. It has a preferred cleavage sequence of Asp-Xaa-Xaa-Asp-|- with a hydrophobic amino-acid residue at P2 and a hydrophilic amino-acid residue at P3, although Val or Ala are also accepted at this position.. Its activity is regulated as follows. Inhibited by BIRC6; following inhibition of BIRC6-caspase binding by DIABLO/SMAC, BIRC6 is subjected to caspase cleavage, leading to an increase in active caspases. Involved in the activation cascade of caspases responsible for apoptosis execution. At the onset of apoptosis, it proteolytically cleaves poly(ADP-ribose) polymerase PARP1 at a '216-Asp-|-Gly-217' bond. Cleaves and activates sterol regulatory element binding proteins (SREBPs) between the basic helix-loop-helix leucine zipper domain and the membrane attachment domain. Cleaves and activates caspase-6, -7 and -9 (CASP6, CASP7 and CASP9, respectively). Cleaves and inactivates interleukin-18 (IL18). Triggers cell adhesion in sympathetic neurons through RET cleavage. Cleaves IL-1 beta between an Asp and an Ala, releasing the mature cytokine which is involved in a variety of inflammatory processes. Cleaves and inhibits serine/threonine-protein kinase AKT1 in response to oxidative stress. Acts as an inhibitor of type I interferon production during virus-induced apoptosis by mediating cleavage of antiviral proteins CGAS, IRF3 and MAVS, thereby preventing cytokine overproduction. Also involved in pyroptosis by mediating cleavage and activation of gasdermin-E (GSDME). Cleaves XRCC4 and phospholipid scramblase proteins XKR4, XKR8 and XKR9, leading to promote phosphatidylserine exposure on apoptotic cell surface. Cleaves BIRC6 following inhibition of BIRC6-caspase binding by DIABLO/SMAC. The polypeptide is Caspase-3 (CASP3) (Macaca fascicularis (Crab-eating macaque)).